The primary structure comprises 565 residues: Mitochondrial distribution and morphology protein 34 (565 aa).

An SMP-LTD domain is found at 1-195 (MAFNFNWSPL…LPAIIHRLSL (195 aa)). 3 disordered regions span residues 207-236 (EDQD…VDAL), 296-317 (PSDQ…LSRT), and 348-504 (STYG…RQLP). Residues 358–370 (RHSKAHARKRKKR) show a composition bias toward basic residues. Basic and acidic residues predominate over residues 371–381 (VVDLRRPKQPE). Over residues 382-401 (SETASVTDESSFTETTSAPS) the composition is skewed to polar residues. 2 stretches are compositionally biased toward basic and acidic residues: residues 446–472 (LRRD…HAEV) and 483–496 (IRHE…EKQE).

It belongs to the MDM34 family. In terms of assembly, component of the ER-mitochondria encounter structure (ERMES) or MDM complex, composed of mmm1, mdm10, mdm12 and mdm34.

The protein localises to the mitochondrion outer membrane. Component of the ERMES/MDM complex, which serves as a molecular tether to connect the endoplasmic reticulum (ER) and mitochondria. Components of this complex are involved in the control of mitochondrial shape and protein biogenesis, and function in nonvesicular lipid trafficking between the ER and mitochondria. Mdm34 is required for the interaction of the ER-resident membrane protein mmm1 and the outer mitochondrial membrane-resident beta-barrel protein mdm10. The polypeptide is Mitochondrial distribution and morphology protein 34 (Aspergillus terreus (strain NIH 2624 / FGSC A1156)).